The sequence spans 459 residues: tRNA modification GTPase MnmE (459 aa).

Positions 29, 86, and 125 each coordinate (6S)-5-formyl-5,6,7,8-tetrahydrofolate. The TrmE-type G domain occupies 221–382; that stretch reads GMNVVIAGRP…LTEHLKAVMG (162 aa). Asparagine 231 lines the K(+) pocket. GTP is bound by residues 231-236, 250-256, and 275-278; these read NAGKSS, TNIEGTT, and DTAG. Residue serine 235 coordinates Mg(2+). The K(+) site is built by threonine 250, isoleucine 252, and threonine 255. A Mg(2+)-binding site is contributed by threonine 256. Lysine 459 contributes to the (6S)-5-formyl-5,6,7,8-tetrahydrofolate binding site.

This sequence belongs to the TRAFAC class TrmE-Era-EngA-EngB-Septin-like GTPase superfamily. TrmE GTPase family. In terms of assembly, homodimer. Heterotetramer of two MnmE and two MnmG subunits. It depends on K(+) as a cofactor.

It is found in the cytoplasm. Its function is as follows. Exhibits a very high intrinsic GTPase hydrolysis rate. Involved in the addition of a carboxymethylaminomethyl (cmnm) group at the wobble position (U34) of certain tRNAs, forming tRNA-cmnm(5)s(2)U34. The protein is tRNA modification GTPase MnmE of Marinomonas sp. (strain MWYL1).